A 154-amino-acid polypeptide reads, in one-letter code: Myoglobin (154 aa).

Residues 2-148 (GLSDGEWQLV…FRNDIAAKYK (147 aa)) form the Globin domain. Serine 4 bears the Phosphoserine mark. Histidine 65 contributes to the nitrite binding site. Histidine 65 contributes to the O2 binding site. Position 68 is a phosphothreonine (threonine 68). Heme b is bound at residue histidine 94.

It belongs to the globin family. Monomeric.

The protein resides in the cytoplasm. It localises to the sarcoplasm. The enzyme catalyses Fe(III)-heme b-[protein] + nitric oxide + H2O = Fe(II)-heme b-[protein] + nitrite + 2 H(+). The catalysed reaction is H2O2 + AH2 = A + 2 H2O. Functionally, monomeric heme protein which primary function is to store oxygen and facilitate its diffusion within muscle tissues. Reversibly binds oxygen through a pentacoordinated heme iron and enables its timely and efficient release as needed during periods of heightened demand. Depending on the oxidative conditions of tissues and cells, and in addition to its ability to bind oxygen, it also has a nitrite reductase activity whereby it regulates the production of bioactive nitric oxide. Under stress conditions, like hypoxia and anoxia, it also protects cells against reactive oxygen species thanks to its pseudoperoxidase activity. The protein is Myoglobin (MB) of Erinaceus europaeus (Western European hedgehog).